We begin with the raw amino-acid sequence, 633 residues long: Heterogeneous nuclear ribonucleoprotein R (633 aa).

The segment at 1-24 (MANQVNGNAVQLKEEEEPMDTSSV) is disordered. A2 carries the post-translational modification N-acetylalanine. Glycyl lysine isopeptide (Lys-Gly) (interchain with G-Cter in SUMO2) cross-links involve residues K13 and K171. RRM domains lie at 165-244 (TEVF…ISVA), 246-328 (NRLF…WADP), and 341-411 (KVLF…LAKP). Residue K359 forms a Glycyl lysine isopeptide (Lys-Gly) (interchain with G-Cter in SUMO2) linkage. K366 is modified (N6-acetyllysine). The Nuclear localization signal motif lies at 412–418 (PDKKRKE). The tract at residues 412-456 (PDKKRKERQAARQASRSTAYEDYYYHPPPRMPPPIRGRGRGGGRG) is disordered. A compositionally biased stretch (pro residues) spans 437–446 (HPPPRMPPPI). An RNA-binding RGG-box region spans residues 447–567 (RGRGRGGGRG…SRGSRGNRGG (121 aa)). The stretch at 462 to 471 (PDYYGYEDYY) is one 1; approximate repeat. The segment at 462–497 (PDYYGYEDYYDDYYGYDYHDYRGGYEDPYYGYDDGY) is 3 X 11 AA approximate repeats of D-D-Y-Y-G-Y-D-Y-H-D-Y. The stretch at 472–482 (DDYYGYDYHDY) is repeat 2. Residues 488-497 (DPYYGYDDGY) form a 3; approximate repeat. Positions 501–510 (GRGGGRGGRG) are enriched in gly residues. Positions 501–633 (GRGGGRGGRG…YQDTYGQQWK (133 aa)) are disordered. Positions 511–524 (APPPPRGRGAPPPR) are enriched in pro residues. A compositionally biased stretch (low complexity) spans 525–541 (GRAGYSQRGAPLGPPRG). The span at 558–570 (SRGSRGNRGGNVG) shows a compositional bias: gly residues. Residues 588–604 (TNNQQNWGSQPIAQQPL) show a composition bias toward polar residues. Low complexity predominate over residues 605-621 (QQGGDYSGNYGYNNDNQ). Residues 622-633 (EFYQDTYGQQWK) show a composition bias toward polar residues.

Identified in the spliceosome C complex. Identified in a IGF2BP1-dependent mRNP granule complex containing untranslated mRNAs. Interacts with GTPBP1.

The protein resides in the nucleus. It localises to the microsome. Its subcellular location is the nucleoplasm. It is found in the cytoplasm. Component of ribonucleosomes, which are complexes of at least 20 other different heterogeneous nuclear ribonucleoproteins (hnRNP). hnRNP play an important role in processing of precursor mRNA in the nucleus. The sequence is that of Heterogeneous nuclear ribonucleoprotein R (HNRNPR) from Homo sapiens (Human).